Consider the following 105-residue polypeptide: Large ribosomal subunit protein uL24 (105 aa).

It belongs to the universal ribosomal protein uL24 family. As to quaternary structure, part of the 50S ribosomal subunit.

Functionally, one of two assembly initiator proteins, it binds directly to the 5'-end of the 23S rRNA, where it nucleates assembly of the 50S subunit. In terms of biological role, one of the proteins that surrounds the polypeptide exit tunnel on the outside of the subunit. The polypeptide is Large ribosomal subunit protein uL24 (Xanthomonas campestris pv. campestris (strain 8004)).